The following is a 416-amino-acid chain: Phosphoglycerate kinase (416 aa).

14 residues coordinate (2R)-3-phosphoglycerate: Val-23, Asp-24, Phe-25, Asn-26, Gln-38, Arg-39, Ser-62, His-63, Gly-65, Arg-66, Leu-121, Arg-122, His-168, and Arg-169. Position 212 (Gly-212) interacts with ADP. Gly-212 lines the CDP pocket. Residues Ala-213 and Lys-214 each coordinate AMP. Position 213 (Ala-213) interacts with ATP. Ala-213 lines the Mg(2+) pocket. Mg(2+) contacts are provided by Ala-216 and Asp-217. A CDP-binding site is contributed by Asp-217. Residue Lys-218 coordinates AMP. Residue Lys-218 coordinates ATP. Residue Gly-236 coordinates ADP. CDP is bound at residue Gly-236. The AMP site is built by Gly-237 and Gly-311. 2 residues coordinate ATP: Gly-237 and Gly-311. The CDP site is built by Gly-336 and Phe-341. ADP is bound at residue Phe-341. Glu-342 contributes to the AMP binding site. ATP is bound by residues Glu-342, Asp-373, and Thr-374. Asp-373 lines the Mg(2+) pocket.

It belongs to the phosphoglycerate kinase family. In terms of assembly, monomer. Mg(2+) is required as a cofactor.

It localises to the cytoplasm. Its subcellular location is the mitochondrion. It carries out the reaction (2R)-3-phosphoglycerate + ATP = (2R)-3-phospho-glyceroyl phosphate + ADP. It participates in carbohydrate degradation; glycolysis; pyruvate from D-glyceraldehyde 3-phosphate: step 2/5. In terms of biological role, catalyzes one of the two ATP producing reactions in the glycolytic pathway via the reversible conversion of 1,3-diphosphoglycerate to 3-phosphoglycerate. Both L- and D- forms of purine and pyrimidine nucleotides can be used as substrates, but the activity is much lower on pyrimidines. Negatively regulates the biosynthesis of acetyl-CoA from pyruvate in the mitochondrion. This is Phosphoglycerate kinase (PGK1) from Candida glabrata (strain ATCC 2001 / BCRC 20586 / JCM 3761 / NBRC 0622 / NRRL Y-65 / CBS 138) (Yeast).